Here is a 79-residue protein sequence, read N- to C-terminus: Sulfur carrier protein TusA (79 aa).

Residue C17 is the Cysteine persulfide intermediate of the active site.

This sequence belongs to the sulfur carrier protein TusA family.

Its subcellular location is the cytoplasm. Its function is as follows. Sulfur carrier protein which probably makes part of a sulfur-relay system. The polypeptide is Sulfur carrier protein TusA (Haemophilus ducreyi (strain 35000HP / ATCC 700724)).